A 311-amino-acid chain; its full sequence is Methionyl-tRNA formyltransferase (311 aa).

S112–P115 contributes to the (6S)-5,6,7,8-tetrahydrofolate binding site.

The protein belongs to the Fmt family.

It catalyses the reaction L-methionyl-tRNA(fMet) + (6R)-10-formyltetrahydrofolate = N-formyl-L-methionyl-tRNA(fMet) + (6S)-5,6,7,8-tetrahydrofolate + H(+). Its function is as follows. Attaches a formyl group to the free amino group of methionyl-tRNA(fMet). The formyl group appears to play a dual role in the initiator identity of N-formylmethionyl-tRNA by promoting its recognition by IF2 and preventing the misappropriation of this tRNA by the elongation apparatus. In Bartonella henselae (strain ATCC 49882 / DSM 28221 / CCUG 30454 / Houston 1) (Rochalimaea henselae), this protein is Methionyl-tRNA formyltransferase.